Here is a 95-residue protein sequence, read N- to C-terminus: Small ribosomal subunit protein bS6 (95 aa).

It belongs to the bacterial ribosomal protein bS6 family.

In terms of biological role, binds together with bS18 to 16S ribosomal RNA. This is Small ribosomal subunit protein bS6 from Corynebacterium diphtheriae (strain ATCC 700971 / NCTC 13129 / Biotype gravis).